Here is a 248-residue protein sequence, read N- to C-terminus: Glycoprotein BILF2 (248 aa).

The signal sequence occupies residues Met1–Ala17. In terms of domain architecture, Ig-like spans Phe19–Ala125. 12 N-linked (GlcNAc...) asparagine; by host glycosylation sites follow: Asn27, Asn37, Asn45, Asn73, Asn83, Asn92, Asn95, Asn104, Asn116, Asn121, Asn131, and Asn144. Residues Cys40 and Cys115 are joined by a disulfide bond. Residues Val167–Val191 are disordered. Basic residues predominate over residues His175–His188. A helical membrane pass occupies residues Trp210–Ser230.

The protein belongs to the Epstein-Barr virus BILF2 protein family.

It is found in the membrane. The polypeptide is Glycoprotein BILF2 (Epstein-Barr virus (strain B95-8) (HHV-4)).